Here is a 633-residue protein sequence, read N- to C-terminus: Pesticidal crystal protein Cry2Aa (633 aa).

The protein belongs to the delta endotoxin family.

In terms of biological role, promotes colloidosmotic lysis by binding to the midgut epithelial cells of both dipteran (Aedes aegypti) and lepidopteran (Manduca sexta) larvae. The sequence is that of Pesticidal crystal protein Cry2Aa (cry2Aa) from Bacillus thuringiensis subsp. kurstaki.